Consider the following 674-residue polypeptide: Sodium/hydrogen exchanger 1 (674 aa).

The N-terminal stretch at 1–24 (MKLNKSYILIVVLLLSLFYSSVSS) is a signal peptide. The tract at residues 31 to 65 (KSNNHYNSDNSNNDNKNININNNNDGDGDDDDDNN) is disordered. Residues 37-55 (NSDNSNNDNKNININNNND) show a composition bias toward low complexity. The next 12 helical transmembrane spans lie at 120–140 (TIIFIIMLILTGSVLIVYFII), 144–164 (IPFVPESVAVVTYGIILGIVF), 175–195 (VVSFEPENFFLFILPTIIFET), 213–233 (MFAVFGTIITFLVVGFGIYIV), 275–297 (LYILVLGESILNDATSMMLYSVV), 314–334 (VVAIGSVILGVVMALLLSLIL), 336–356 (WINIGKFPALETIFMVMFSYM), 359–379 (VLAGALDISGVLAVFFFGITL), 401–421 (TAAFISETFLFLYFGLSLTAH), 432–452 (WSILFTCLARAISVFPMCFLL), 460–480 (IPWVIQVAIWFAGLRGAFAFS), and 499–519 (NTLLVVVFTIFVFGMGTYPLL). Residues 591–674 (HELDSNPLRF…NKNNDTLPLI (84 aa)) are disordered. Residues 601–618 (DDDEEDDDDEDLDFDSDL) show a composition bias toward acidic residues. The span at 627–657 (DSIHQSDNNNNDNGNNNNNNNNIIINNNSQH) shows a compositional bias: low complexity. Residues 662 to 674 (GSNNKNNDTLPLI) are compositionally biased toward polar residues.

This sequence belongs to the monovalent cation:proton antiporter 1 (CPA1) transporter (TC 2.A.36) family.

The protein localises to the membrane. With respect to regulation, LY294002, an inhibitor of the catalytic subunit of PI3-kinase, blocks NHE1-dependent (but not NHE1-independent) increase in intracellular pH in response to cAMP. Functionally, regulation of intracellular pH homeostasis in response to cAMP, which is essential for chemotaxis. Necessary for F-actin localization and the kinetics of actin polymerization during chemotaxis and cell polarity but not for directional sensing. This is Sodium/hydrogen exchanger 1 (nhe1) from Dictyostelium discoideum (Social amoeba).